Here is a 133-residue protein sequence, read N- to C-terminus: Transcription antitermination protein NusB (133 aa).

The protein belongs to the NusB family.

Involved in transcription antitermination. Required for transcription of ribosomal RNA (rRNA) genes. Binds specifically to the boxA antiterminator sequence of the ribosomal RNA (rrn) operons. In Shouchella clausii (strain KSM-K16) (Alkalihalobacillus clausii), this protein is Transcription antitermination protein NusB.